The sequence spans 195 residues: dITP/XTP pyrophosphatase (195 aa).

8–13 (SNNQGK) serves as a coordination point for substrate. Mg(2+)-binding residues include E39 and D68. Residue D68 is the Proton acceptor of the active site. Substrate contacts are provided by residues S69, 149–152 (FGYD), K172, and 177–178 (HR).

Belongs to the HAM1 NTPase family. Homodimer. Mg(2+) serves as cofactor.

The enzyme catalyses XTP + H2O = XMP + diphosphate + H(+). The catalysed reaction is dITP + H2O = dIMP + diphosphate + H(+). It carries out the reaction ITP + H2O = IMP + diphosphate + H(+). Pyrophosphatase that catalyzes the hydrolysis of nucleoside triphosphates to their monophosphate derivatives, with a high preference for the non-canonical purine nucleotides XTP (xanthosine triphosphate), dITP (deoxyinosine triphosphate) and ITP. Seems to function as a house-cleaning enzyme that removes non-canonical purine nucleotides from the nucleotide pool, thus preventing their incorporation into DNA/RNA and avoiding chromosomal lesions. The protein is dITP/XTP pyrophosphatase of Staphylococcus aureus (strain Mu50 / ATCC 700699).